The primary structure comprises 328 residues: Probable G-protein coupled receptor 82 (328 aa).

The Extracellular portion of the chain corresponds to 1-11; the sequence is MTNNSTCIQPS. Residues Asn-3 and Asn-4 are each glycosylated (N-linked (GlcNAc...) asparagine). A helical membrane pass occupies residues 12–32; the sequence is VISTTALPVTYIFLFIIGLFG. Topologically, residues 33–55 are cytoplasmic; it reads NSLAQWVFLTKIGKKTSTHIYLA. A helical membrane pass occupies residues 56 to 76; it reads NLVTANLLVCTAMPFMGIYFL. Topologically, residues 77–92 are extracellular; sequence RGFYWKYQSVQCRLVN. Residues 93–115 form a helical membrane-spanning segment; it reads FLGTLSMHVSMFVSLLILSWIAI. The Cytoplasmic segment spans residues 116–156; the sequence is SRYATLMKKESKQEATSCYERMFYGHVLKRFRQPNFARTMC. The helical transmembrane segment at 157–177 threads the bilayer; sequence IYIWGVVLVIIIPVTLYYSVV. The Extracellular segment spans residues 178-197; the sequence is EATEEGQSQCYNRQMELGAR. Residues 198–218 traverse the membrane as a helical segment; the sequence is PSQIAGLIGTTFIGFSFLVVV. Over 219 to 251 the chain is Cytoplasmic; sequence TSYYSLVSHLRRVRTCTSITEKDLTYRSVKRHL. Residues 252-272 traverse the membrane as a helical segment; sequence LIIQVLLVVCFLPYSIFKPIF. Residues 273–328 are Extracellular-facing; sequence YVLHQREGDCQQLNYLIEAKNILTCLASARSSTDPIIFLLLDKTFKKTLYGLLTKS.

Belongs to the G-protein coupled receptor 1 family.

It localises to the cell membrane. Functionally, orphan receptor. The chain is Probable G-protein coupled receptor 82 (Gpr82) from Mus musculus (Mouse).